The primary structure comprises 271 residues: MEELRERVWHGSLNVEIMLSDSIVVPNTPLSEKCYHIVVLRESFLALYLPAIVRKLGNNVIVTYENPYKQWWFEYDGVPVPWEYPCGVLFDFLCNSSTTSTGKEDDQRLQMWKLKLCHGNKYPPGILPLVDGLRQVKDHWKHQWKQACFILNGSAKRIMSLSIPDFEAFWQSLISRHQPDYIKVREKLLTPNKTKHIPIRVWTADASFLQPSIPANSDTMTLFDVMTSMDIKLQENNRAIIQGIVICSDEDIINLYDLFASIDGFLYVVIK.

Residue Lys145 forms a Glycyl lysine isopeptide (Lys-Gly) (interchain with G-Cter in ATG12) linkage.

This sequence belongs to the ATG5 family. As to quaternary structure, conjugated with ATG12. Conjugated to ATG12; which is essential for autophagy.

The protein localises to the preautophagosomal structure membrane. Involved in cytoplasm to vacuole transport (Cvt) and autophagic vesicle formation. Autophagy is essential for maintenance of amino acid levels and protein synthesis under nitrogen starvation. Required for selective autophagic degradation of the nucleus (nucleophagy). Also required for mitophagy, which eliminates defective or superfluous mitochondria in order to fulfill cellular energy requirements and prevent excess ROS production. Conjugation with ATG12, through a ubiquitin-like conjugating system involving ATG7 as an E1-like activating enzyme and ATG10 as an E2-like conjugating enzyme, is essential for its function. The ATG12-ATG5 conjugate acts as an E3-like enzyme which is required for lipidation of ATG8 and ATG8 association to the vesicle membranes. This Kluyveromyces lactis (strain ATCC 8585 / CBS 2359 / DSM 70799 / NBRC 1267 / NRRL Y-1140 / WM37) (Yeast) protein is Autophagy protein 5 (ATG5).